The chain runs to 251 residues: Cell division protein ZapD (251 aa).

This sequence belongs to the ZapD family. Interacts with FtsZ.

Its subcellular location is the cytoplasm. In terms of biological role, cell division factor that enhances FtsZ-ring assembly. Directly interacts with FtsZ and promotes bundling of FtsZ protofilaments, with a reduction in FtsZ GTPase activity. This chain is Cell division protein ZapD, found in Paraburkholderia phymatum (strain DSM 17167 / CIP 108236 / LMG 21445 / STM815) (Burkholderia phymatum).